The chain runs to 892 residues: MTQYTPMIQQYLKVKADYQDAFLFFRLGDFYEMFFEDAVKAAHELEITLTSRDGGSSDRIPMCGVPHHAAKNYIEQLVEKGYKVAVCEQVEDPKTAKGVVRREVVQLITPGTMMEGRTIDEKENNFLAALTHFEDGSYALACNDLTTGQNTVTLLTGSVEDILLEVYATGSKEIVVDSSFSKDELNKLTETLKMTISYEDATAIPEGLEHLVKNVSQAKLIKAIGRLFNYVIRTQKRSLDHLQPVEIYYTNQFMKIDVHSKRNLELTETLRTKEKTGSLLWLLDKTKTAMGGRMLKQWMERPLIQKEKVEERLEMVETFVNDYFLREDLKEKLKEVYDLERLAGKVAFGNVNARDLLQLRRSLLQVPAILEAISLLDNAYAARLIQGADPCESLTELLGRSIQENPPLSIKDGDIIKDGYNDKLDQYRYVSKNGKTWIAELEKRERDITGVKSLKIGYNRIFGYYIEVTKANLAALPEGRYERKQTLANAERFITDELKEKETLILEAEEKIVQLEYDLFTALREEVKVFIPKLQHLAKVISELDVLQSFATVSEEEQFVKPVLTTKREIFIKDGRHPVVEKVLNGKLYVPNDCIMPEKMDVFLITGPNMSGKSTYMRQLALVTVMSQIGCFVPATEAVLPVFDQIFTRIGAADDLISGQSTFMVEMLEAKNAIANASERSLILFDEIGRGTSTYDGMALAQAIIEHIHDQIGAKTLFSTHYHELTVLEESLDQLKNVHVSAIEENGKVVFLHKIQDGAADKSYGIHVAQLAELPDSLIARAKEVLAQLEGQEEIIIPKRVEVKVQEQEVIPEPVVVKEEPVEVLEAKVETEEESQLSFFGGEQSSKKQDKLALNQKETAVLAQIKKIDLLDMTPLEAMNELYRLQKKLKKG.

An ATP-binding site is contributed by 607 to 614; that stretch reads GPNMSGKS.

This sequence belongs to the DNA mismatch repair MutS family.

Functionally, this protein is involved in the repair of mismatches in DNA. It is possible that it carries out the mismatch recognition step. This protein has a weak ATPase activity. The polypeptide is DNA mismatch repair protein MutS (Bacillus cereus (strain G9842)).